The chain runs to 686 residues: Putative xyloglucan glycosyltransferase 10 (686 aa).

Helical transmembrane passes span 114 to 134 and 160 to 180; these read LYAFIRASLLLSVFLLAVELA and AAYVAPPLQLLADACVVLFLV. The active site involves Asp267. Positions 326 and 328 each coordinate substrate. The active site involves Asp420. 4 consecutive transmembrane segments (helical) span residues 498 to 518, 523 to 543, 640 to 656, and 661 to 681; these read LILPFYSFTLFCIILPMTMFI, LPDWVVCYIPALMSFLNILPA, ELALSLLLLTAAARSLL, and IHFYFLMFQGLSFLLVGLDLI.

Belongs to the glycosyltransferase 2 family. Plant cellulose synthase-like C subfamily.

The protein resides in the golgi apparatus membrane. Probable beta-1,4-glucan synthase rather involved in the synthesis of the xyloglucan backbone than cellulose. Seems to work simultaneously with xyloglucan 6-xylosyltransferase. Xyloglucan is a noncellulosic polysaccharides of plant cell wall and consists of a glucan backbone substituted by xylose, galactose and fucose. This Oryza sativa subsp. indica (Rice) protein is Putative xyloglucan glycosyltransferase 10 (CSLC10).